A 284-amino-acid polypeptide reads, in one-letter code: Shikimate dehydrogenase (NADP(+)) (284 aa).

Shikimate is bound by residues 20–22 and S67; that span reads SIS. The Proton acceptor role is filled by K71. Residue D83 coordinates NADP(+). 2 residues coordinate shikimate: N92 and D107. NADP(+) is bound by residues 129–133 and I227; that span reads GAGGA. Residue Y229 coordinates shikimate. NADP(+) is bound at residue G250.

Belongs to the shikimate dehydrogenase family. Homodimer.

It catalyses the reaction shikimate + NADP(+) = 3-dehydroshikimate + NADPH + H(+). It participates in metabolic intermediate biosynthesis; chorismate biosynthesis; chorismate from D-erythrose 4-phosphate and phosphoenolpyruvate: step 4/7. Functionally, involved in the biosynthesis of the chorismate, which leads to the biosynthesis of aromatic amino acids. Catalyzes the reversible NADPH linked reduction of 3-dehydroshikimate (DHSA) to yield shikimate (SA). The polypeptide is Shikimate dehydrogenase (NADP(+)) (Streptococcus pneumoniae (strain Taiwan19F-14)).